A 605-amino-acid chain; its full sequence is Probable serine/threonine-protein kinase DDB_G0286481 (605 aa).

The helical transmembrane segment at 5 to 25 (YQIFFLLYLLCILYVISCGYI) threads the bilayer. N-linked (GlcNAc...) asparagine glycosylation is present at Asn53. 2 stretches are compositionally biased toward low complexity: residues 54–81 (SSNNNNNNNNNNNNNNNNNNNNNNNNNN) and 89–104 (NCNNNSSNNNSDNKSN). Positions 54-170 (SSNNNNNNNN…LGGSMGSGSQ (117 aa)) are disordered. Asn92, Asn93, Asn97, and Asn101 each carry an N-linked (GlcNAc...) asparagine glycan. The segment covering 105–123 (IKNKQHHHHSNFRNRRGKS) has biased composition (basic residues). An N-linked (GlcNAc...) asparagine glycan is attached at Asn127. Over residues 144–155 (QSSSYDTSELHQ) the composition is skewed to polar residues. N-linked (GlcNAc...) asparagine glycosylation is present at Asn280. The region spanning 312–597 (YEVIQKIGRG…AKEAMKHPYF (286 aa)) is the Protein kinase domain. ATP-binding positions include 318-326 (IGRGKYSEV) and Lys341. The N-linked (GlcNAc...) asparagine glycan is linked to Asn390. Asp429 functions as the Proton acceptor in the catalytic mechanism. A glycan (N-linked (GlcNAc...) asparagine) is linked at Asn601.

Belongs to the protein kinase superfamily. CMGC Ser/Thr protein kinase family.

The protein resides in the membrane. It catalyses the reaction L-seryl-[protein] + ATP = O-phospho-L-seryl-[protein] + ADP + H(+). The enzyme catalyses L-threonyl-[protein] + ATP = O-phospho-L-threonyl-[protein] + ADP + H(+). This is Probable serine/threonine-protein kinase DDB_G0286481 from Dictyostelium discoideum (Social amoeba).